The sequence spans 393 residues: NAD(P)H-quinone oxidoreductase subunit H, chloroplastic (393 aa).

It belongs to the complex I 49 kDa subunit family. In terms of assembly, NDH is composed of at least 16 different subunits, 5 of which are encoded in the nucleus.

The protein localises to the plastid. The protein resides in the chloroplast thylakoid membrane. It carries out the reaction a plastoquinone + NADH + (n+1) H(+)(in) = a plastoquinol + NAD(+) + n H(+)(out). The catalysed reaction is a plastoquinone + NADPH + (n+1) H(+)(in) = a plastoquinol + NADP(+) + n H(+)(out). In terms of biological role, NDH shuttles electrons from NAD(P)H:plastoquinone, via FMN and iron-sulfur (Fe-S) centers, to quinones in the photosynthetic chain and possibly in a chloroplast respiratory chain. The immediate electron acceptor for the enzyme in this species is believed to be plastoquinone. Couples the redox reaction to proton translocation, and thus conserves the redox energy in a proton gradient. The polypeptide is NAD(P)H-quinone oxidoreductase subunit H, chloroplastic (Phaseolus vulgaris (Kidney bean)).